Consider the following 224-residue polypeptide: Dimethyl sulfoxide reductase transcriptional activator (224 aa).

The region spanning 158-209 is the HTH bat-type domain; that stretch reads LTDKQREAAAAAVAKGYYATPRGADLSDLATALGISKSAVSQRLSAVESKLA.

Functionally, involved in activating dmsEABCD gene expression related to dimethyl sulfoxide (DMSO) reductase. Required for anaerobic respiration on dimethyl sulfoxide (DMSO) and trimethylamine N-oxide (TMAO). In Halobacterium salinarum (strain ATCC 700922 / JCM 11081 / NRC-1) (Halobacterium halobium), this protein is Dimethyl sulfoxide reductase transcriptional activator (dmsR).